Consider the following 630-residue polypeptide: uncharacterized protein (630 aa).

Helical transmembrane passes span 254–274, 504–524, 564–584, and 601–621; these read MFYA…ELRV, IALL…LTSI, MIFA…SMVF, and IIVI…AVLF.

The protein localises to the cell membrane. This is an uncharacterized protein from Mycoplasma genitalium (strain ATCC 33530 / DSM 19775 / NCTC 10195 / G37) (Mycoplasmoides genitalium).